We begin with the raw amino-acid sequence, 200 residues long: Ribonuclease HII (200 aa).

The 191-residue stretch at L10–F200 folds into the RNase H type-2 domain. Positions 16, 17, and 108 each coordinate a divalent metal cation.

Belongs to the RNase HII family. Requires Mn(2+) as cofactor. The cofactor is Mg(2+).

Its subcellular location is the cytoplasm. The catalysed reaction is Endonucleolytic cleavage to 5'-phosphomonoester.. Endonuclease that specifically degrades the RNA of RNA-DNA hybrids. This chain is Ribonuclease HII, found in Bacteroides thetaiotaomicron (strain ATCC 29148 / DSM 2079 / JCM 5827 / CCUG 10774 / NCTC 10582 / VPI-5482 / E50).